Consider the following 805-residue polypeptide: Transcription factor SFL1 (805 aa).

The span at 1–24 shows a compositional bias: low complexity; the sequence is MSHLVSSSLGTTTTATPTSRSPHT. Residues 1–110 form a disordered region; it reads MSHLVSSSLG…NNNVSNNNST (110 aa). Residues 25 to 69 are compositionally biased toward polar residues; that stretch reads NHSTPYNQNSITSNRSSPVPKNSVNSRIIPQTMNPPIDMKSNNIL. The segment covering 71-85 has biased composition (basic and acidic residues); the sequence is PEKDTDTSRGDHSES. The span at 86–110 shows a compositional bias: low complexity; the sequence is KASSISSASGTTTTNNNNVSNNNST. The DNA-binding element occupies 117-226; it reads FIHKLYDMLH…LKNIKRRSSK (110 aa). Disordered regions lie at residues 273–336, 438–483, 513–675, 691–746, and 759–805; these read MQSP…NQSP, QSNF…VAPQ, REDS…PAPQ, HQKS…SENH, and VSEL…RKLE. The span at 295 to 310 shows a compositional bias: low complexity; sequence QQQQQQQQQQQQQQQQ. Composition is skewed to polar residues over residues 454-480 and 533-556; these read HGNS…NLNV and PSRN…NFNP. The span at 557–566 shows a compositional bias: low complexity; sequence QQSQSQSQVQ. Polar residues-rich tracts occupy residues 581–597, 604–614, and 622–635; these read ESTY…SQIL, VNHSPLVQQQQ, and NDSS…SSLP. Residues 637–659 are compositionally biased toward low complexity; it reads TRPLSRQQQQQQQTLHHPSTTSS. Over residues 716–738 the composition is skewed to polar residues; the sequence is PISSTAPTTMITSTSKPTSTSGA.

This sequence belongs to the HSF family.

It is found in the nucleus. Transcription factor that plays a role of repressor of filamentous growth and flocculation. Antagonizes functions of SFL2 and FLO8. Plays a role in the hyphal repression induced by secreted factors like dodecanol by competitors such as Pseudomonas aeruginosa and Burkholderia cenocepacia. The polypeptide is Transcription factor SFL1 (SFL1) (Candida albicans (strain SC5314 / ATCC MYA-2876) (Yeast)).